Here is a 644-residue protein sequence, read N- to C-terminus: Acetyl-coenzyme A synthetase 2 (644 aa).

CoA-binding positions include 189–192, Thr307, and Asn331; that span reads RGGK. ATP contacts are provided by residues 383 to 385, 407 to 412, Asp496, and Arg511; these read GEP and DTWWQT. Position 519 (Ser519) interacts with CoA. Position 522 (Arg522) interacts with ATP. The Mg(2+) site is built by Val533, His535, and Val538. Lys605 is modified (N6-acetyllysine).

It belongs to the ATP-dependent AMP-binding enzyme family. It depends on Mg(2+) as a cofactor. Post-translationally, acetylated. Deacetylation by the SIR2-homolog deacetylase activates the enzyme.

The enzyme catalyses acetate + ATP + CoA = acetyl-CoA + AMP + diphosphate. In terms of biological role, catalyzes the conversion of acetate into acetyl-CoA (AcCoA), an essential intermediate at the junction of anabolic and catabolic pathways. AcsA undergoes a two-step reaction. In the first half reaction, AcsA combines acetate with ATP to form acetyl-adenylate (AcAMP) intermediate. In the second half reaction, it can then transfer the acetyl group from AcAMP to the sulfhydryl group of CoA, forming the product AcCoA. The chain is Acetyl-coenzyme A synthetase 2 from Pseudomonas putida (strain ATCC 47054 / DSM 6125 / CFBP 8728 / NCIMB 11950 / KT2440).